The following is a 348-amino-acid chain: Small ribosomal subunit biogenesis GTPase RsgA (348 aa).

The interval 1–32 (MAKQKLTQNQKRRIHSNNAKALDRHRRQTKKQ) is disordered. The region spanning 106-274 (KNELSRPDYY…LIDSPGIREF (169 aa)) is the CP-type G domain. GTP contacts are provided by residues 162 to 165 (NKID) and 216 to 224 (GQSGVGKSS). Zn(2+)-binding residues include cysteine 298, cysteine 303, histidine 305, and cysteine 311.

This sequence belongs to the TRAFAC class YlqF/YawG GTPase family. RsgA subfamily. As to quaternary structure, monomer. Associates with 30S ribosomal subunit, binds 16S rRNA. The cofactor is Zn(2+).

It is found in the cytoplasm. Its function is as follows. One of several proteins that assist in the late maturation steps of the functional core of the 30S ribosomal subunit. Helps release RbfA from mature subunits. May play a role in the assembly of ribosomal proteins into the subunit. Circularly permuted GTPase that catalyzes slow GTP hydrolysis, GTPase activity is stimulated by the 30S ribosomal subunit. This chain is Small ribosomal subunit biogenesis GTPase RsgA, found in Actinobacillus succinogenes (strain ATCC 55618 / DSM 22257 / CCUG 43843 / 130Z).